Reading from the N-terminus, the 499-residue chain is Catalase (499 aa).

The segment at 1–25 (MTDRPIMTTSAGAPIPDNQNSLTAG) is disordered. Residues 7 to 23 (MTTSAGAPIPDNQNSLT) show a composition bias toward polar residues. Active-site residues include histidine 55 and asparagine 127. Tyrosine 337 contacts heme.

The protein belongs to the catalase family. In terms of assembly, homotetramer. Heme is required as a cofactor.

Its subcellular location is the periplasm. It carries out the reaction 2 H2O2 = O2 + 2 H2O. Functionally, decomposes hydrogen peroxide into water and oxygen; serves to protect cells from the toxic effects of hydrogen peroxide. The protein is Catalase (katA) of Brucella abortus biovar 1 (strain 9-941).